The primary structure comprises 387 residues: Probable aminomethyltransferase, mitochondrial (387 aa).

3 residues coordinate substrate: glutamate 219, arginine 248, and tyrosine 385.

Belongs to the GcvT family. In terms of assembly, the glycine cleavage system is composed of four proteins: P, T, L and H.

The protein resides in the mitochondrion. The enzyme catalyses N(6)-[(R)-S(8)-aminomethyldihydrolipoyl]-L-lysyl-[protein] + (6S)-5,6,7,8-tetrahydrofolate = N(6)-[(R)-dihydrolipoyl]-L-lysyl-[protein] + (6R)-5,10-methylene-5,6,7,8-tetrahydrofolate + NH4(+). In terms of biological role, the glycine cleavage system catalyzes the degradation of glycine. This chain is Probable aminomethyltransferase, mitochondrial (gcv1), found in Schizosaccharomyces pombe (strain 972 / ATCC 24843) (Fission yeast).